A 314-amino-acid polypeptide reads, in one-letter code: Homoserine O-acetyltransferase (314 aa).

The active-site Acyl-thioester intermediate is the C142. Substrate is bound by residues K163 and S192. H235 (proton acceptor) is an active-site residue. Residue E237 is part of the active site. Substrate is bound at residue R249.

This sequence belongs to the MetA family.

The protein resides in the cytoplasm. It catalyses the reaction L-homoserine + acetyl-CoA = O-acetyl-L-homoserine + CoA. The protein operates within amino-acid biosynthesis; L-methionine biosynthesis via de novo pathway; O-acetyl-L-homoserine from L-homoserine: step 1/1. In terms of biological role, transfers an acetyl group from acetyl-CoA to L-homoserine, forming acetyl-L-homoserine. This chain is Homoserine O-acetyltransferase, found in Streptococcus thermophilus (strain ATCC BAA-491 / LMD-9).